The sequence spans 184 residues: uncharacterized protein (184 aa).

The Nudix hydrolase domain maps to 36 to 164; sequence LRHRATYIVV…TPDSLKALAL (129 aa). The Nudix box motif lies at 73–95; that stretch reads GGVVQADEQLLESARREAEEELG. Glu89 and Glu93 together coordinate Mg(2+).

It belongs to the Nudix hydrolase family. Requires Mg(2+) as cofactor.

This is an uncharacterized protein from Salmonella typhi.